The sequence spans 1342 residues: DNA-directed RNA polymerase subunit beta (1342 aa).

Belongs to the RNA polymerase beta chain family. As to quaternary structure, the RNAP catalytic core consists of 2 alpha, 1 beta, 1 beta' and 1 omega subunit. When a sigma factor is associated with the core the holoenzyme is formed, which can initiate transcription.

The catalysed reaction is RNA(n) + a ribonucleoside 5'-triphosphate = RNA(n+1) + diphosphate. DNA-dependent RNA polymerase catalyzes the transcription of DNA into RNA using the four ribonucleoside triphosphates as substrates. This chain is DNA-directed RNA polymerase subunit beta, found in Salmonella choleraesuis (strain SC-B67).